The chain runs to 119 residues: Beta-2-microglobulin (119 aa).

Positions M1–A20 are cleaved as a signal peptide. Residues P25–K114 enclose the Ig-like C1-type domain. C45 and C100 form a disulfide bridge.

This sequence belongs to the beta-2-microglobulin family. As to quaternary structure, heterodimer of an alpha chain and a beta chain. Beta-2-microglobulin is the beta-chain of major histocompatibility complex class I molecules.

Its subcellular location is the secreted. In terms of biological role, component of the class I major histocompatibility complex (MHC). Involved in the presentation of peptide antigens to the immune system. The protein is Beta-2-microglobulin (B2M) of Callithrix aurita (White-eared marmoset).